We begin with the raw amino-acid sequence, 196 residues long: Large ribosomal subunit protein eL15 (196 aa).

The disordered stretch occupies residues 155-196; sequence THRGRAERGLTSAGKKGRGQRRKGKGTEKNYPSVQAHDRRGK. A compositionally biased stretch (basic residues) spans 169 to 178; that stretch reads KKGRGQRRKG.

The protein belongs to the eukaryotic ribosomal protein eL15 family.

The sequence is that of Large ribosomal subunit protein eL15 from Methanocella arvoryzae (strain DSM 22066 / NBRC 105507 / MRE50).